Reading from the N-terminus, the 660-residue chain is RalBP1-associated Eps domain-containing protein 2 (660 aa).

Residues 34–147 form the EH 1 domain; it reads EQQCYSELFA…RFMMSKNDGE (114 aa). Residues 169–208 form a disordered region; the sequence is EKNSFKRMDDEDKQQETQSPTMSPLASPPSSPPHYQRVPL. Serine 254 is modified (phosphoserine). Residues 282–373 enclose the EH 2 domain; the sequence is QREYYVNQFR…LQPEYLQAAF (92 aa). One can recognise an EF-hand domain in the interval 315–350; the sequence is LSIPELSYIWELSDADCDGALTLPEFCAAFHLIVAR. Residues aspartate 328, aspartate 330, aspartate 332, and glutamate 339 each coordinate Ca(2+). Residues 433-616 form a disordered region; that stretch reads NEALPKDVSE…KQKKAIQTAI (184 aa). A Phosphothreonine modification is found at threonine 479. Serine 493 bears the Phosphoserine mark. A compositionally biased stretch (pro residues) spans 512–523; the sequence is LPPPPALPPRPC. The interval 514-660 is interaction with RALBP1; that stretch reads PPPALPPRPC…LEQLRPVTVL (147 aa). The segment at 561-660 is interaction with ASAP1; the sequence is PPSKPIRRKF…LEQLRPVTVL (100 aa). The span at 582–594 shows a compositional bias: low complexity; the sequence is PSTAASGPASAAT. Residues 601–657 adopt a coiled-coil conformation; sequence VQKQSSKQKKAIQTAIRKNKEANAVLARLNSELQQQLKEVHQERIALENQLEQLRPV.

As to quaternary structure, interacts with EPN1; the interaction is direct. Interacts with EPS15; the interaction is direct. Interacts with EPS15L1. Interacts with RALBP1; can form a ternary complex with activated Ral (RALA or RALB). Interacts with ASAP1; the interaction is direct and this complex can bind paxillin. Also forms a ternary complex with RALBP1 and ASAP1. Interacts with GRB2. Post-translationally, tyrosine-phosphorylated upon stimulation of cells with EGF. Phosphorylation on Tyr-residues induces its association with the EGF receptor probably indirectly through an adapter like GRB2. In terms of tissue distribution, expressed at high levels in the cerebrum, cerebellum, lung, kidney, and testis. Weakly expressed in the kidney. Isoform 2 is down-regulated during progression of prostate cancer.

The protein localises to the cytoplasm. Its function is as follows. Involved in ligand-dependent receptor mediated endocytosis of the EGF and insulin receptors as part of the Ral signaling pathway. By controlling growth factor receptors endocytosis may regulate cell survival. Through ASAP1 may regulate cell adhesion and migration. This chain is RalBP1-associated Eps domain-containing protein 2 (REPS2), found in Homo sapiens (Human).